Reading from the N-terminus, the 136-residue chain is Large ribosomal subunit protein uL16c (136 aa).

The tract at residues 1 to 20 (MLSPKRTRFRKQHRGRMKGK) is disordered.

It belongs to the universal ribosomal protein uL16 family. In terms of assembly, part of the 50S ribosomal subunit.

Its subcellular location is the plastid. It localises to the chloroplast. The protein is Large ribosomal subunit protein uL16c of Agrostis stolonifera (Creeping bentgrass).